Reading from the N-terminus, the 1331-residue chain is uncharacterized protein (1331 aa).

The next 8 helical transmembrane spans lie at 373–393 (VIGV…SLIV), 487–507 (ALFL…LILI), 534–554 (LLIF…SFGI), 579–599 (VVGL…ISLL), 653–673 (LVFL…SFAT), 1206–1226 (VIAV…TTLI), 1255–1275 (IPLF…LIAL), and 1297–1317 (AIGS…LNWL).

It belongs to the ABC-4 integral membrane protein family.

The protein resides in the cell membrane. This is an uncharacterized protein from Mycoplasma genitalium (strain ATCC 33530 / DSM 19775 / NCTC 10195 / G37) (Mycoplasmoides genitalium).